Reading from the N-terminus, the 129-residue chain is Transcriptional activator protein (129 aa).

The span at 1–12 shows a compositional bias: low complexity; that stretch reads MRSSSPSQPPSI. A disordered region spans residues 1 to 23; that stretch reads MRSSSPSQPPSIKKAHRQAKKRA. Residues 13 to 23 are compositionally biased toward basic residues; that stretch reads KKAHRQAKKRA. Residues 13 to 28 carry the Nuclear localization signal motif; sequence KKAHRQAKKRAIRRRR. A zinc finger spans residues 33 to 50; it reads CGCSIYFHIDCAGHGFTH. A disordered region spans residues 73-117; it reads LFQDKPSRGHAIHQDQDIQRPNPVQPQPQESIGSPQSIPELPSLD. Polar residues predominate over residues 99–109; that stretch reads QPQESIGSPQS. The segment at 115-129 is transactivation; that stretch reads SLDDIDDSFWVELFS.

The protein belongs to the geminiviridae transcriptional activator protein family. Monomer. Homodimer. Homooligomer. Self-interaction correlates with nuclear localization and efficient activation of transcription. Monomers suppress local silencing by interacting with and inactivating host adenosine kinase 2 (ADK2) in the cytoplasm. Interacts with and inhibits host SNF1 kinase. Binds to ssDNA. Phosphorylated.

Its subcellular location is the host nucleus. It localises to the host cytoplasm. Its function is as follows. Strong activator of the late viral genes promoters. Enhances the expression of the capsid protein and nuclear shuttle protein. Acts as a suppressor of RNA-mediated gene silencing, also known as post-transcriptional gene silencing (PTGS), a mechanism of plant viral defense that limits the accumulation of viral RNAs. Suppresses the host RNA silencing by inhibiting adenosine kinase 2 (ADK2), a kinase involved in a general methylation pathway. Also suppresses the host basal defense by interacting with and inhibiting SNF1 kinase, a key regulator of cell metabolism implicated in innate antiviral defense. Determines pathogenicity. This Solanum tuberosum (Potato) protein is Transcriptional activator protein.